Reading from the N-terminus, the 200-residue chain is 3-isopropylmalate dehydratase small subunit (200 aa).

It belongs to the LeuD family. LeuD type 1 subfamily. As to quaternary structure, heterodimer of LeuC and LeuD.

The catalysed reaction is (2R,3S)-3-isopropylmalate = (2S)-2-isopropylmalate. Its pathway is amino-acid biosynthesis; L-leucine biosynthesis; L-leucine from 3-methyl-2-oxobutanoate: step 2/4. Functionally, catalyzes the isomerization between 2-isopropylmalate and 3-isopropylmalate, via the formation of 2-isopropylmaleate. The chain is 3-isopropylmalate dehydratase small subunit from Arthrobacter sp. (strain FB24).